The sequence spans 486 residues: ATP synthase subunit beta, chloroplastic (486 aa).

ATP is bound at residue 154 to 161; that stretch reads GGAGVGKT.

It belongs to the ATPase alpha/beta chains family. F-type ATPases have 2 components, CF(1) - the catalytic core - and CF(0) - the membrane proton channel. CF(1) has five subunits: alpha(3), beta(3), gamma(1), delta(1), epsilon(1). CF(0) has four main subunits: a(1), b(1), b'(1) and c(9-12).

Its subcellular location is the plastid. The protein localises to the chloroplast thylakoid membrane. The catalysed reaction is ATP + H2O + 4 H(+)(in) = ADP + phosphate + 5 H(+)(out). Functionally, produces ATP from ADP in the presence of a proton gradient across the membrane. The catalytic sites are hosted primarily by the beta subunits. This Dennstaedtia punctilobula (Hay-scented fern) protein is ATP synthase subunit beta, chloroplastic.